A 152-amino-acid chain; its full sequence is Cell division protein SepF (152 aa).

Residues 25–54 (EEREPVQEEKGTKDKAAFQERPQTGKQNVV) are disordered. Positions 28–42 (EPVQEEKGTKDKAAF) are enriched in basic and acidic residues.

This sequence belongs to the SepF family. Homodimer. Interacts with FtsZ.

It is found in the cytoplasm. Functionally, cell division protein that is part of the divisome complex and is recruited early to the Z-ring. Probably stimulates Z-ring formation, perhaps through the cross-linking of FtsZ protofilaments. Its function overlaps with FtsA. This is Cell division protein SepF from Bacillus pumilus (strain SAFR-032).